The following is a 374-amino-acid chain: Dual-specificity RNA methyltransferase RlmN (374 aa).

Glu94 functions as the Proton acceptor in the catalytic mechanism. In terms of domain architecture, Radical SAM core spans 100–339; the sequence is EEDRATLCVS…VTIRKTRGDD (240 aa). Cysteines 107 and 344 form a disulfide. [4Fe-4S] cluster is bound by residues Cys114, Cys118, and Cys121. Residues 168–169, Ser200, 222–224, and Asn301 contribute to the S-adenosyl-L-methionine site; these read GE and SLH. Cys344 functions as the S-methylcysteine intermediate in the catalytic mechanism.

This sequence belongs to the radical SAM superfamily. RlmN family. [4Fe-4S] cluster is required as a cofactor.

The protein localises to the cytoplasm. It carries out the reaction adenosine(2503) in 23S rRNA + 2 reduced [2Fe-2S]-[ferredoxin] + 2 S-adenosyl-L-methionine = 2-methyladenosine(2503) in 23S rRNA + 5'-deoxyadenosine + L-methionine + 2 oxidized [2Fe-2S]-[ferredoxin] + S-adenosyl-L-homocysteine. The catalysed reaction is adenosine(37) in tRNA + 2 reduced [2Fe-2S]-[ferredoxin] + 2 S-adenosyl-L-methionine = 2-methyladenosine(37) in tRNA + 5'-deoxyadenosine + L-methionine + 2 oxidized [2Fe-2S]-[ferredoxin] + S-adenosyl-L-homocysteine. Functionally, specifically methylates position 2 of adenine 2503 in 23S rRNA and position 2 of adenine 37 in tRNAs. m2A2503 modification seems to play a crucial role in the proofreading step occurring at the peptidyl transferase center and thus would serve to optimize ribosomal fidelity. This Vibrio vulnificus (strain CMCP6) protein is Dual-specificity RNA methyltransferase RlmN.